Here is a 216-residue protein sequence, read N- to C-terminus: Adenylate kinase (216 aa).

Residue Gly-10–Thr-15 coordinates ATP. The NMP stretch occupies residues Ser-30–Val-59. Residues Thr-31, Arg-36, Gln-57–Val-59, Gly-85–Arg-88, and Gln-92 each bind AMP. The interval Gly-126–Asp-163 is LID. Arg-127 is a binding site for ATP. Residues Cys-130 and Cys-133 each coordinate Zn(2+). ATP is bound at residue Ser-136–Tyr-137. Positions 150 and 153 each coordinate Zn(2+). 2 residues coordinate AMP: Arg-160 and Arg-171. An ATP-binding site is contributed by Gln-199.

The protein belongs to the adenylate kinase family. Monomer.

Its subcellular location is the cytoplasm. The enzyme catalyses AMP + ATP = 2 ADP. It functions in the pathway purine metabolism; AMP biosynthesis via salvage pathway; AMP from ADP: step 1/1. Catalyzes the reversible transfer of the terminal phosphate group between ATP and AMP. Plays an important role in cellular energy homeostasis and in adenine nucleotide metabolism. The sequence is that of Adenylate kinase from Clostridium perfringens (strain ATCC 13124 / DSM 756 / JCM 1290 / NCIMB 6125 / NCTC 8237 / Type A).